A 452-amino-acid polypeptide reads, in one-letter code: MTAKPTIAFSHLGCEKNRIDTEHMIGLLAEAGYGIDANEALADVVVVNTCSFIQAAREESVRTLVELAESGKKIVIAGCLAQHFQDQLLAELPEAIALVGTGDYHRIVDVLQRTESGERVNAISQEPSFIADENLPRYRTTTSAVAYLRVAEGCDYRCAFCIIPHLRGKQRSRSIESIVAEAKQLAAEGVQELVLISQITTNYGLDRYGKPMLAELLRQLGQVDVPWIRIHYAYPTGLTPEVIAAIRETHNVLPYLDLPLQHSHPEILKAMNRPWQGNVNDRIIEKLKEALPDAVLRTTFIAGFPGETEEHFRHLQQFIQRHEFDHVGVFAFSPEEGTAAIDLPNPVPDDVKEARRDALMATQQPIAERRNRAQIGRLVDVLIEQEHPSTGLKIGRSARFAPEVDGVVYVQGDAALGQLVTVRITDADIYDLHGEVASAADLFQASRQPSLA.

Positions 5-116 (PTIAFSHLGC…IVDVLQRTES (112 aa)) constitute an MTTase N-terminal domain. Residues cysteine 14, cysteine 50, cysteine 79, cysteine 154, cysteine 158, and cysteine 161 each contribute to the [4Fe-4S] cluster site. The Radical SAM core domain maps to 140 to 369 (TTTSAVAYLR…MATQQPIAER (230 aa)). The TRAM domain occupies 372–438 (RAQIGRLVDV…IYDLHGEVAS (67 aa)).

This sequence belongs to the methylthiotransferase family. RimO subfamily. Requires [4Fe-4S] cluster as cofactor.

The protein resides in the cytoplasm. The catalysed reaction is L-aspartate(89)-[ribosomal protein uS12]-hydrogen + (sulfur carrier)-SH + AH2 + 2 S-adenosyl-L-methionine = 3-methylsulfanyl-L-aspartate(89)-[ribosomal protein uS12]-hydrogen + (sulfur carrier)-H + 5'-deoxyadenosine + L-methionine + A + S-adenosyl-L-homocysteine + 2 H(+). Catalyzes the methylthiolation of an aspartic acid residue of ribosomal protein uS12. The protein is Ribosomal protein uS12 methylthiotransferase RimO of Synechococcus elongatus (strain ATCC 33912 / PCC 7942 / FACHB-805) (Anacystis nidulans R2).